A 162-amino-acid chain; its full sequence is Endoribonuclease YbeY (162 aa).

Zn(2+) is bound by residues His117, His121, and His127.

This sequence belongs to the endoribonuclease YbeY family. The cofactor is Zn(2+).

It is found in the cytoplasm. In terms of biological role, single strand-specific metallo-endoribonuclease involved in late-stage 70S ribosome quality control and in maturation of the 3' terminus of the 16S rRNA. This is Endoribonuclease YbeY from Francisella tularensis subsp. holarctica (strain OSU18).